We begin with the raw amino-acid sequence, 88 residues long: Alpha-latrotoxin-associated low molecular weight protein (88 aa).

A signal peptide spans 1 to 18; the sequence is MSKLFFVVFLCLIISVFA.

This sequence belongs to the arthropod CHH/MIH/GIH/VIH hormone family. Expressed by the venom gland.

It localises to the secreted. Its function is as follows. May increase the toxicity of alpha-latrotoxin and/or other venom components. Is non-toxic to mice and to the cockroach Periplaneta americana. This chain is Alpha-latrotoxin-associated low molecular weight protein, found in Latrodectus tredecimguttatus (Mediterranean black widow spider).